The primary structure comprises 103 residues: Large ribosomal subunit protein bL21 (103 aa).

The protein belongs to the bacterial ribosomal protein bL21 family. Part of the 50S ribosomal subunit. Contacts protein L20.

Functionally, this protein binds to 23S rRNA in the presence of protein L20. The protein is Large ribosomal subunit protein bL21 of Photobacterium profundum (strain SS9).